Here is a 343-residue protein sequence, read N- to C-terminus: Methionine import ATP-binding protein MetN (343 aa).

One can recognise an ABC transporter domain in the interval 2–241 (IKLSNITKVF…PKTPLAQKFI (240 aa)). Residue 40 to 46 (SGAGKST) coordinates ATP. Residues 265–343 (CVPMLRLEFT…HVKVEVLGYV (79 aa)) are C2 domain. L-methionine is bound by residues 278-283 (VDAPLL) and 295-296 (NI).

Belongs to the ABC transporter superfamily. Methionine importer (TC 3.A.1.24) family. In terms of assembly, the complex is composed of two ATP-binding proteins (MetN), two transmembrane proteins (MetI) and a solute-binding protein (MetQ).

The protein localises to the cell inner membrane. The enzyme catalyses L-methionine(out) + ATP + H2O = L-methionine(in) + ADP + phosphate + H(+). It catalyses the reaction D-methionine(out) + ATP + H2O = D-methionine(in) + ADP + phosphate + H(+). ATPase activity is inhibited by intracellular L-methionine. Binding of methionine to the dimerized C-terminal regulatory domain stabilizes an inward-facing, ATPase-inactive conformation of the transporter, and as a consequence, the rate of ATP hydrolysis decreases. ADP is a competitive inhibitor. Functionally, part of the ABC transporter complex MetNIQ involved in methionine import. Responsible for energy coupling to the transport system. It has also been shown to be involved in formyl-L-methionine transport. This is Methionine import ATP-binding protein MetN from Escherichia coli (strain K12).